The chain runs to 366 residues: GTP cyclohydrolase 1 type 2 homolog (366 aa).

A divalent metal cation contacts are provided by histidine 64, histidine 65, aspartate 102, histidine 326, and glutamate 329.

Belongs to the GTP cyclohydrolase I type 2/NIF3 family. Homohexamer.

In Staphylococcus epidermidis (strain ATCC 12228 / FDA PCI 1200), this protein is GTP cyclohydrolase 1 type 2 homolog.